Here is a 395-residue protein sequence, read N- to C-terminus: S-adenosylmethionine synthase (395 aa).

Residue H16 participates in ATP binding. Residue D18 participates in Mg(2+) binding. E44 provides a ligand contact to K(+). 2 residues coordinate L-methionine: E57 and Q100. The flexible loop stretch occupies residues 100–110 (QSTDIAQGVNE). Residues 174–176 (DAK), 241–242 (RF), D250, 256–257 (RK), A273, and K277 contribute to the ATP site. Residue D250 coordinates L-methionine. K281 lines the L-methionine pocket.

This sequence belongs to the AdoMet synthase family. Homotetramer; dimer of dimers. Requires Mg(2+) as cofactor. The cofactor is K(+).

The protein localises to the cytoplasm. The catalysed reaction is L-methionine + ATP + H2O = S-adenosyl-L-methionine + phosphate + diphosphate. The protein operates within amino-acid biosynthesis; S-adenosyl-L-methionine biosynthesis; S-adenosyl-L-methionine from L-methionine: step 1/1. Catalyzes the formation of S-adenosylmethionine (AdoMet) from methionine and ATP. The overall synthetic reaction is composed of two sequential steps, AdoMet formation and the subsequent tripolyphosphate hydrolysis which occurs prior to release of AdoMet from the enzyme. This is S-adenosylmethionine synthase from Streptococcus uberis (strain ATCC BAA-854 / 0140J).